Here is a 185-residue protein sequence, read N- to C-terminus: Large ribosomal subunit protein uL5m (185 aa).

The protein belongs to the universal ribosomal protein uL5 family.

It is found in the mitochondrion. This chain is Large ribosomal subunit protein uL5m (RPL5), found in Brassica napus (Rape).